The following is a 493-amino-acid chain: Xylulose kinase (493 aa).

A substrate-binding site is contributed by 84–85 (QH). Residue Asp247 is the Proton acceptor of the active site.

Belongs to the FGGY kinase family.

It carries out the reaction D-xylulose + ATP = D-xylulose 5-phosphate + ADP + H(+). Its function is as follows. Catalyzes the phosphorylation of D-xylulose to D-xylulose 5-phosphate. The polypeptide is Xylulose kinase (Haemophilus influenzae (strain ATCC 51907 / DSM 11121 / KW20 / Rd)).